The chain runs to 149 residues: 3-dehydroquinate dehydratase (149 aa).

Tyrosine 26 acts as the Proton acceptor in catalysis. Substrate is bound by residues asparagine 77, histidine 83, and aspartate 90. Catalysis depends on histidine 103, which acts as the Proton donor. Substrate contacts are provided by residues 104–105 (LS) and arginine 114.

It belongs to the type-II 3-dehydroquinase family. Homododecamer.

It catalyses the reaction 3-dehydroquinate = 3-dehydroshikimate + H2O. It functions in the pathway metabolic intermediate biosynthesis; chorismate biosynthesis; chorismate from D-erythrose 4-phosphate and phosphoenolpyruvate: step 3/7. Functionally, catalyzes a trans-dehydration via an enolate intermediate. In Aeromonas hydrophila subsp. hydrophila (strain ATCC 7966 / DSM 30187 / BCRC 13018 / CCUG 14551 / JCM 1027 / KCTC 2358 / NCIMB 9240 / NCTC 8049), this protein is 3-dehydroquinate dehydratase.